We begin with the raw amino-acid sequence, 608 residues long: Protein UL27 (608 aa).

Residues 1-13 (MNPVDQPPPPLPT) show a composition bias toward pro residues. Residues 1–33 (MNPVDQPPPPLPTQQPEEQAKEDHDDGDERLFR) form a disordered region. The span at 18 to 33 (EQAKEDHDDGDERLFR) shows a compositional bias: basic and acidic residues.

The protein belongs to the herpesviridae U4 family. As to quaternary structure, interacts with host KAT5, PSME3 and EP400.

Its subcellular location is the host nucleus. The protein resides in the host nucleolus. Functionally, promotes a cell cycle arrest in G0/G1 by inducing the proteasomal degradation of host histone acetyltransferase KAT5/Tip60. The sequence is that of Protein UL27 (UL27) from Human cytomegalovirus (strain AD169) (HHV-5).